Consider the following 223-residue polypeptide: UPF0441 protein YgiB (223 aa).

Residues 178 to 195 show a composition bias toward low complexity; the sequence is TVPKTAMAPKPATTTTVT. The interval 178–223 is disordered; it reads TVPKTAMAPKPATTTTVTRGGFGESVAKQSTLQRSATGTSSRSMGG. Positions 204 to 223 are enriched in polar residues; that stretch reads AKQSTLQRSATGTSSRSMGG.

Belongs to the UPF0441 family.

The polypeptide is UPF0441 protein YgiB (Escherichia coli (strain ATCC 8739 / DSM 1576 / NBRC 3972 / NCIMB 8545 / WDCM 00012 / Crooks)).